A 483-amino-acid polypeptide reads, in one-letter code: UDP-glucosyl transferase 73B2 (483 aa).

The active-site Proton acceptor is His22. Residue His22 participates in an anthocyanidin binding. The active-site Charge relay is the Asp133. UDP-alpha-D-glucose-binding residues include Ala355, Gln357, His372, Trp375, Asn376, Ser377, and Glu380. Ala395 contributes to the an anthocyanidin binding site. UDP-alpha-D-glucose contacts are provided by Glu396 and Gln397.

It belongs to the UDP-glycosyltransferase family. As to expression, expressed in roots and flowers.

It catalyses the reaction a 7-O-hydroxy-flavonol + UDP-alpha-D-glucose = a flavonol 7-O-beta-D-glucoside + UDP + H(+). The protein operates within secondary metabolite biosynthesis; flavonoid biosynthesis. Functionally, catalyzes the glycosylation of flavonoids from UDP-glucose. Uses a wide range of flavonoid substrates including flavonols (quercetin, kaempferol, isorhamnetin, 3-OH 7,2',4'-MeO-flavone), flavones (luteolin, apigenin), flavanones (naringenin, hesperetin), flavanonols (taxifolin), isoflavones (genistein, daidzein), flavonol glycosides (quercitrin, isoquercitrin, rutin), and chalcones (isoliquiritigenin). Specific for the C-7 position, with a 20-fold lower activity for the C-3 position. This chain is UDP-glucosyl transferase 73B2 (UGT73B2), found in Arabidopsis thaliana (Mouse-ear cress).